Consider the following 426-residue polypeptide: Histidinol dehydrogenase (426 aa).

NAD(+)-binding residues include Tyr126, Gln188, and Asn210. Substrate contacts are provided by Ser233, Gln255, and His258. The Zn(2+) site is built by Gln255 and His258. Residues Glu323 and His324 each act as proton acceptor in the active site. The substrate site is built by His324, Asp357, Glu411, and His416. Zn(2+) is bound at residue Asp357. Residue His416 coordinates Zn(2+).

The protein belongs to the histidinol dehydrogenase family. It depends on Zn(2+) as a cofactor.

It catalyses the reaction L-histidinol + 2 NAD(+) + H2O = L-histidine + 2 NADH + 3 H(+). It functions in the pathway amino-acid biosynthesis; L-histidine biosynthesis; L-histidine from 5-phospho-alpha-D-ribose 1-diphosphate: step 9/9. Functionally, catalyzes the sequential NAD-dependent oxidations of L-histidinol to L-histidinaldehyde and then to L-histidine. This Heliobacterium mobile (Heliobacillus mobilis) protein is Histidinol dehydrogenase.